Reading from the N-terminus, the 35-residue chain is Somatostatin (35 aa).

An intrachain disulfide couples C24 to C35.

This sequence belongs to the somatostatin family.

The protein localises to the secreted. In terms of biological role, somatostatin inhibits the release of somatotropin. The sequence is that of Somatostatin (sst) from Lampetra fluviatilis (European river lamprey).